Reading from the N-terminus, the 511-residue chain is uncharacterized protein (511 aa).

The 253-residue stretch at 2-254 (LMDYEKERTE…NFQEKAPIHE (253 aa)) folds into the CoA carboxyltransferase N-terminal domain. The tract at residues 2–506 (LMDYEKERTE…KEMTFTNRKH (505 aa)) is carboxyltransferase. Residues 260–506 (HFETPLADVI…KEMTFTNRKH (247 aa)) enclose the CoA carboxyltransferase C-terminal domain.

It belongs to the AccD/PCCB family.

This is an uncharacterized protein from Bacillus subtilis (strain 168).